The primary structure comprises 68 residues: Adipokinetic prohormone type 1 (68 aa).

The first 20 residues, 1–20 (MNKIYFVIVFVACFCLFAEA), serve as a signal peptide directing secretion. At glutamine 21 the chain carries Pyrrolidone carboxylic acid. Glycine 30 is modified (glycine amide). Positions 34–68 (SGVAPMSCKNEEAVATIFKLIQNEAERFIICQQKS) are excised as a propeptide.

As to expression, expressed in antennal lobe (AL), corpora cardiaca (CC), corpora allata (CA) and gnathal ganglion (GNG) (at protein level). Expression in CC and CA detected in all animals, expression in GNG in some animals and in AL in few animals (at protein level).

The protein resides in the secreted. This hormone, released from cells in the corpora cardiaca, causes release of diglycerides from the fat body and stimulation of muscles to use these diglycerides as an energy source during energy-demanding processes. In Agrotis ipsilon (Black cutworm moth), this protein is Adipokinetic prohormone type 1.